The primary structure comprises 219 residues: Ras-related protein Rab-3B (219 aa).

The residue at position 2 (alanine 2) is an N-acetylalanine. GTP-binding residues include serine 31, serine 32, valine 33, glycine 34, lysine 35, threonine 36, serine 37, proline 49, and serine 53. Threonine 36 contacts Mg(2+). The Switch 1 signature appears at aspartate 45–aspartate 58. Mg(2+) is bound by residues threonine 54 and aspartate 77. The Switch 2 signature appears at threonine 78–methionine 96. GTP is bound at residue glycine 80. Threonine 86 is modified (phosphothreonine). Residues asparagine 135, lysine 136, aspartate 138, alanine 166, and lysine 167 each coordinate GTP. At serine 188 the chain carries Phosphoserine. 2 S-geranylgeranyl cysteine lipidation sites follow: cysteine 217 and cysteine 219. Cysteine 219 carries the cysteine methyl ester modification.

The protein belongs to the small GTPase superfamily. Rab family. Interacts with RIMS1, RIMS2, RPH3A and RPH3AL. The GTP-bound form interacts with GAS8/DRC4 (via coiled-coil domains). Interacts with GDI2, CHM and CHML; phosphorylation at Thr-86 disrupts these interactions. Interacts with MADD (via uDENN domain); the GTP-bound form is preferred for interaction. It depends on Mg(2+) as a cofactor. Post-translationally, phosphorylation of Thr-86 in the switch II region by LRRK2 prevents the association of RAB regulatory proteins, including CHM, CHML and RAB GDP dissociation inhibitor GDI2.

The protein resides in the cell membrane. The protein localises to the golgi apparatus. The catalysed reaction is GTP + H2O = GDP + phosphate + H(+). Its activity is regulated as follows. Regulated by guanine nucleotide exchange factors (GEFs) which promote the exchange of bound GDP for free GTP. Regulated by GTPase activating proteins (GAPs) which increase the GTP hydrolysis activity. Inhibited by GDP dissociation inhibitors (GDIs) which prevent Rab-GDP dissociation. Functionally, the small GTPases Rab are key regulators of intracellular membrane trafficking, from the formation of transport vesicles to their fusion with membranes. Rabs cycle between an inactive GDP-bound form and an active GTP-bound form that is able to recruit to membranes different sets of downstream effectors directly responsible for vesicle formation, movement, tethering and fusion. This is Ras-related protein Rab-3B (RAB3B) from Bos taurus (Bovine).